The sequence spans 194 residues: 7-methyl-GTP pyrophosphatase (194 aa).

The Proton acceptor role is filled by Asp70.

Belongs to the Maf family. YceF subfamily. It depends on a divalent metal cation as a cofactor.

The protein localises to the cytoplasm. The catalysed reaction is N(7)-methyl-GTP + H2O = N(7)-methyl-GMP + diphosphate + H(+). Nucleoside triphosphate pyrophosphatase that hydrolyzes 7-methyl-GTP (m(7)GTP). May have a dual role in cell division arrest and in preventing the incorporation of modified nucleotides into cellular nucleic acids. This chain is 7-methyl-GTP pyrophosphatase, found in Vibrio vulnificus (strain CMCP6).